The chain runs to 485 residues: Glutamyl-tRNA(Gln) amidotransferase subunit A (485 aa).

Catalysis depends on charge relay system residues lysine 78 and serine 153. The Acyl-ester intermediate role is filled by serine 177.

The protein belongs to the amidase family. GatA subfamily. Heterotrimer of A, B and C subunits.

The enzyme catalyses L-glutamyl-tRNA(Gln) + L-glutamine + ATP + H2O = L-glutaminyl-tRNA(Gln) + L-glutamate + ADP + phosphate + H(+). Its function is as follows. Allows the formation of correctly charged Gln-tRNA(Gln) through the transamidation of misacylated Glu-tRNA(Gln) in organisms which lack glutaminyl-tRNA synthetase. The reaction takes place in the presence of glutamine and ATP through an activated gamma-phospho-Glu-tRNA(Gln). The chain is Glutamyl-tRNA(Gln) amidotransferase subunit A from Bacillus cereus (strain G9842).